A 2059-amino-acid polypeptide reads, in one-letter code: MGGQHFLLFGDQTVELIPSLQRLLRLSQSSPTAGVFLQNALDVIQRKTSTLSANERSNIGHFESFESILQKYSHTEDTIGVTHTVVICACRLAELIILVENDPSLLGASSKVTALGLCTGLLPAAALAGSRNISDLVSISVDTVAICFRLALELYRRTRHIEEVPGHWAYTILGIPAREMETLLEDFHRSKSTPSHRNVFIGVEEESWLTLFGPPPEFAQLFSYSAKIESAPKLKLAAYGAVHSPHLPVPDVEAIVGTSSILDRTITSRVQVLSTSTGEPYHPSTLRELFVQVSQEIVQKRLKMNIVLKSAAQRLSPTKPVQLTVVGLTNATPIVKRALDEQRLSVSVLNDPTGVSQPPGDTRAGSNSIAIVGMAGRFPGSEDLEGFWQSLLDGLDAHEEIPSDRFDIGTYFDSTGRAKNSLTTRYGCFLRNPGHFDHRLFNVSPREAEQMSPMQRLLLMSSYEALQMAGYSSNGSMSTQSQRVATYFGQAADDWKDGSRISGIDLYYIPGLQRGFTPGRLNFHYKWEGASYSVDSACASSASAIGLACSALLSRECDTALAGGVNSVTSPEPYSGLSKGSFLSPTGGCKTFQDAADGYCRGEAVGVVVLKRLEDAIHDNDNVLAVIRGHGRNHSAHASSITHPHAETQVRLYHDVLQKAGVQAQEIGFVEMHGTGTQAGDAVEMTSVLDVFGRDRTRHNPLVVGAVKANLGHTEAAAGAVSVIKSVMALQRRIIPPQPGVPFKVNHNYPDLKNLNVRIADAQIEFHKPTGGNGKRKVMVNNFDAAGGNSCLILEEAPEHAKKSQDPRAHHTVVLSARTSASLKNNKERLLEYLIAHPGTELADLAYSTTARRIHEELRSAYSGNSIESIRQQIRDDVSKQTATQGPSQKRSVAWVFSGQGSQYPGMGSELFHSNATFRASIRSMQSISHTQGFPSFIELISDKDVDLSEKTAVQVQLAVVAVEIALAYLWRSWGVNPDVVIGHSLGEYAALCVSGVLSVTDVLYLVGQRALLTEDKLTANSYAMLATVAPAQAVEEYIRRPEFESCCISCYNSPTATVISGPVSELQALESSLRSAGTVCTLVRVPYGFHSPQMDPILDGFERRARSVQFQAPRTPIASTVTASITRDSGQFTSNYLARQAREPVHFYKALAACKADGVVDQNTIWLEIGPDSVCGSMVKATLGATNVYSSLRSREANWKTISSTVAALYTSRSSISWPDFHQEYTSSLRLLDLPTYAFDTKNFWRVYEETVPVEQVTLHKAEPRKPISSSLHFVKKETVTKDEAAVIFETLLSDENLYEAIRGHLVDELPLCPSGIYCDMALTAAKYVFGKMNPKQNTVSNMAITGLTINHPVVVASKDSKQILQTSVEKNPRTGDKVTITFHLHDGSFTQEIGFCQVHTFSASEWTDEWSNASFFVKSRMEGLVQSVKAGRGDHLRRPVVYKLFAHLVDYDEKYQAIEELFWDEHSNDAVANITLKPYNGRGEFECLPYWTDPLVHLAGFVLNVNLTGSDNSVYLSGGVKRMQVYGQLSAEKKYTSYVRTHPADDHGTTLSDVYVFGQEGIVGFCSLVFQRMPRMVLHHLLHRKEAKAPVKAAPERTMTVPKSEKVHVSSQLPDAPPKHDLADQLITIVAEETGVDLVDMTPTADFASMGVDSLMSITIIDRVQKEIGVQLEASFFQENLTVSDARRALGGDETASESENDAEGDAPSDGGSPSGSWTPISPPESDVEELIVTPTKIVIEAAAKLSAPPPAEVVEVVVEPEPIVKVLPPTPTPPAVEYKSNVVLIHGRKKSNKTPLFLITDGAGSATAYLHLPRFPTGMPLYAVESPFVRCPLEYNFSVEETAEMYIAAIKKIQPEGPYNLGGWSAGGAHAFEVSRRLLESGEKVQRLIIIDMKIPKPMPEGLEVTMDFLDKVGLTTGINRAGPALAGMSERLKQHLASTIKALMVYTARPMDPARRPEKTYLIWAEYGLAEIIGDAAFKDVASMMGLKEDVEGNPMEDDTGLGSWFYSRRDNFGPNGWDKLLGPVECRTVKADHFSMVTPPAANDLGKLLQEAVA.

The region spanning 7-243 is the Starter acyltransferase (SAT) domain; the sequence is LLFGDQTVEL…LKLAAYGAVH (237 aa). Positions 366–796 constitute a Ketosynthase family 3 (KS3) domain; it reads SNSIAIVGMA…GGNSCLILEE (431 aa). Residues Cys538, His673, and His713 each act as for beta-ketoacyl synthase activity in the active site. The Malonyl-CoA:ACP transacylase (MAT) domain occupies 895–1185; that stretch reads WVFSGQGSQY…CGSMVKATLG (291 aa). The segment at 1273-1413 is N-terminal hotdog fold; the sequence is LHFVKKETVT…SASEWTDEWS (141 aa). Residues 1273–1581 enclose the PKS/mFAS DH domain; sequence LHFVKKETVT…FQRMPRMVLH (309 aa). His1306 (proton acceptor; for dehydratase activity) is an active-site residue. The interval 1435 to 1581 is C-terminal hotdog fold; that stretch reads GDHLRRPVVY…FQRMPRMVLH (147 aa). Asp1495 acts as the Proton donor; for dehydratase activity in catalysis. One can recognise a Carrier domain in the interval 1619-1696; it reads PPKHDLADQL…DARRALGGDE (78 aa). The residue at position 1656 (Ser1656) is an O-(pantetheine 4'-phosphoryl)serine. Residues 1693 to 1727 form a disordered region; that stretch reads GGDETASESENDAEGDAPSDGGSPSGSWTPISPPE. Positions 1697 to 1709 are enriched in acidic residues; the sequence is TASESENDAEGDA. Positions 1710-1719 are enriched in low complexity; the sequence is PSDGGSPSGS. Residues 1778-2059 are thioesterase (TE) domain; the sequence is AVEYKSNVVL…LGKLLQEAVA (282 aa).

Requires pantetheine 4'-phosphate as cofactor.

It functions in the pathway mycotoxin biosynthesis. Functionally, non-reducing polyketide synthase; part of the gene cluster that mediates the biosynthesis of stromemycin, a depside C-glucoside with two unsaturated C9 side chains belonging to aromatic polyketide glycosides. The HR-PKS stmA and the NR-PKS stmB act as scaffold-generating enzymes responsible for the biosynthesis of the polyketide skeleton bininalkenylresorcylic acid. StmA condenses on acetyl-CoA starter unit with 4 malonyl-CoA units and the stmB uses 3 more malonyl-CoA units and catalyzes the depside bond formation. The glycoytransferase stmC then acts as the tailoring enzyme responsible for 3-C-glucosylation of bininalkenylresorcylic acid to yield stromemycin. This is Non-reducing polyketide synthase stmB from Aspergillus ustus.